Consider the following 81-residue polypeptide: Photosystem I iron-sulfur center (81 aa).

4Fe-4S ferredoxin-type domains are found at residues 2–31 (SHSV…MVAW) and 39–68 (IASA…VRVY). [4Fe-4S] cluster is bound by residues C11, C14, C17, C21, C48, C51, C54, and C58.

The eukaryotic PSI reaction center is composed of at least 11 subunits. [4Fe-4S] cluster is required as a cofactor.

Its subcellular location is the plastid. The protein resides in the chloroplast thylakoid membrane. It catalyses the reaction reduced [plastocyanin] + hnu + oxidized [2Fe-2S]-[ferredoxin] = oxidized [plastocyanin] + reduced [2Fe-2S]-[ferredoxin]. Functionally, apoprotein for the two 4Fe-4S centers FA and FB of photosystem I (PSI); essential for photochemical activity. FB is the terminal electron acceptor of PSI, donating electrons to ferredoxin. The C-terminus interacts with PsaA/B/D and helps assemble the protein into the PSI complex. Required for binding of PsaD and PsaE to PSI. PSI is a plastocyanin/cytochrome c6-ferredoxin oxidoreductase, converting photonic excitation into a charge separation, which transfers an electron from the donor P700 chlorophyll pair to the spectroscopically characterized acceptors A0, A1, FX, FA and FB in turn. This chain is Photosystem I iron-sulfur center, found in Guillardia theta (Cryptophyte).